Consider the following 176-residue polypeptide: Nucleoside triphosphate/diphosphate phosphatase (176 aa).

Arg-23 functions as the Proton donor in the catalytic mechanism. Mg(2+) is bound by residues Asn-87, Asp-103, Asp-105, Asp-107, Asp-120, and Glu-123.

This sequence belongs to the Ntdp family. Mg(2+) serves as cofactor.

The enzyme catalyses a ribonucleoside 5'-triphosphate + H2O = a ribonucleoside 5'-diphosphate + phosphate + H(+). It carries out the reaction a ribonucleoside 5'-diphosphate + H2O = a ribonucleoside 5'-phosphate + phosphate + H(+). In terms of biological role, has nucleoside phosphatase activity towards nucleoside triphosphates and nucleoside diphosphates. This Bacillus pumilus (strain SAFR-032) protein is Nucleoside triphosphate/diphosphate phosphatase.